Consider the following 61-residue polypeptide: Small ribosomal subunit protein uS14 (61 aa).

Residues Cys24, Cys27, Cys40, and Cys43 each contribute to the Zn(2+) site.

The protein belongs to the universal ribosomal protein uS14 family. Zinc-binding uS14 subfamily. In terms of assembly, part of the 30S ribosomal subunit. Contacts proteins S3 and S10. Zn(2+) serves as cofactor.

Functionally, binds 16S rRNA, required for the assembly of 30S particles and may also be responsible for determining the conformation of the 16S rRNA at the A site. The sequence is that of Small ribosomal subunit protein uS14 from Geobacter metallireducens (strain ATCC 53774 / DSM 7210 / GS-15).